We begin with the raw amino-acid sequence, 169 residues long: ATP synthase subunit b (169 aa).

The helical transmembrane segment at 11–31 threads the bilayer; the sequence is IPSFIAQVVNFGLLLGLLYLF.

Belongs to the ATPase B chain family. In terms of assembly, F-type ATPases have 2 components, F(1) - the catalytic core - and F(0) - the membrane proton channel. F(1) has five subunits: alpha(3), beta(3), gamma(1), delta(1), epsilon(1). F(0) has three main subunits: a(1), b(2) and c(10-14). The alpha and beta chains form an alternating ring which encloses part of the gamma chain. F(1) is attached to F(0) by a central stalk formed by the gamma and epsilon chains, while a peripheral stalk is formed by the delta and b chains.

The protein localises to the cell membrane. F(1)F(0) ATP synthase produces ATP from ADP in the presence of a proton or sodium gradient. F-type ATPases consist of two structural domains, F(1) containing the extramembraneous catalytic core and F(0) containing the membrane proton channel, linked together by a central stalk and a peripheral stalk. During catalysis, ATP synthesis in the catalytic domain of F(1) is coupled via a rotary mechanism of the central stalk subunits to proton translocation. Its function is as follows. Component of the F(0) channel, it forms part of the peripheral stalk, linking F(1) to F(0). The protein is ATP synthase subunit b of Dehalococcoides mccartyi (strain ATCC BAA-2266 / KCTC 15142 / 195) (Dehalococcoides ethenogenes (strain 195)).